Consider the following 133-residue polypeptide: Snaclec purpureotin subunit alpha (133 aa).

Disulfide bonds link cysteine 2–cysteine 13, cysteine 30–cysteine 127, and cysteine 102–cysteine 119. Positions 9–128 constitute a C-type lectin domain; that stretch reads FKQYCYQIIK…CEQKHIFMCK (120 aa).

The protein belongs to the snaclec family. In terms of assembly, homodimer (non-covalently linked) of heterodimer of alpha and beta subunits (disulfide-linked). Expressed by the venom gland.

It localises to the secreted. Snaclec that induces platelet aggregation without any cofactor in a dose-dependent manner. Its platelet aggregation effect is blocked by echicetin, suggesting it is a GPIb-binding protein which binds to the same or a closely related GPIb site on platelets as echicetin. This is Snaclec purpureotin subunit alpha from Trimeresurus purpureomaculatus (Mangrove pit viper).